Reading from the N-terminus, the 531-residue chain is MSQEILDQVRRRRTFAIISHPDAGKTTLTEKLLLFSGAIQSAGTVKGKKTGKFATSDWMDIEKQRGISVASSVMQFDYKDHTVNLLDTPGHQDFSEDTYRVLTAVDSALMVIDAAKGVEAQTIKLLNVCRLRDTPIVTFMNKYDREVRDSLELLDEVENILQIRCAPVTWPIGMGKNFKGVYHILNDEIYLFEAGGERLPHEFDIIKGIDNPELEQRFPLEIQQLRDEIELVQAASNEFNLDEFLAGELTPVFFGSAINNFGIQEILNSLIDWAPAPKPRDATVRMVEPDEAKFSGFIFKIQANMDPKHRDRIAFLRVCSGKFERGMKMKHLRINREIAASSVVTFMSHDRELVEEAYAGDIIGIPNHGNIQIGDSFSEGEQLAFTGIPFFAPELFRSVRIKNPLKIKQLQKGLQQLGEEGAVQVFKPMSGADLILGAVGVLQFEVVTSRLANEYGVEAVFDSASIWSARWVSCDDKKKLAEFEKANAGNLAIDAGGNLAYLAPNRVNLGLTQERWPDIVFHETREHSVKL.

The region spanning 10-278 (RRRRTFAIIS…SLIDWAPAPK (269 aa)) is the tr-type G domain. GTP contacts are provided by residues 19–26 (SHPDAGKT), 87–91 (DTPGH), and 141–144 (NKYD).

The protein belongs to the TRAFAC class translation factor GTPase superfamily. Classic translation factor GTPase family. PrfC subfamily.

It localises to the cytoplasm. Its function is as follows. Increases the formation of ribosomal termination complexes and stimulates activities of RF-1 and RF-2. It binds guanine nucleotides and has strong preference for UGA stop codons. It may interact directly with the ribosome. The stimulation of RF-1 and RF-2 is significantly reduced by GTP and GDP, but not by GMP. This Neisseria meningitidis serogroup C / serotype 2a (strain ATCC 700532 / DSM 15464 / FAM18) protein is Peptide chain release factor 3.